The primary structure comprises 153 residues: UPF0178 protein CC_1215 (153 aa).

This sequence belongs to the UPF0178 family.

The sequence is that of UPF0178 protein CC_1215 from Caulobacter vibrioides (strain ATCC 19089 / CIP 103742 / CB 15) (Caulobacter crescentus).